The sequence spans 729 residues: Dipeptidyl peptidase 3 (729 aa).

Position 459 (His459) interacts with Zn(2+). Glu460 is a catalytic residue. Zn(2+)-binding residues include His464 and Glu517.

Belongs to the peptidase M49 family. The cofactor is Zn(2+).

Its subcellular location is the cytoplasm. It carries out the reaction Release of an N-terminal dipeptide from a peptide comprising four or more residues, with broad specificity. Also acts on dipeptidyl 2-naphthylamides.. In Nematostella vectensis (Starlet sea anemone), this protein is Dipeptidyl peptidase 3 (dpp3).